The following is a 739-amino-acid chain: Putative apoptosis-inducing factor 1, mitochondrial (739 aa).

The N-terminal 42 residues, 1–42, are a transit peptide targeting the mitochondrion; it reads MSIWGVRCLTQRFIRQAYILANRRLLGPVPQRSPPAYAPLRP. The interval 257–564 is FAD-dependent oxidoreductase; that stretch reads YLIIGGGTAA…ARRNLYVAGD (308 aa). FAD contacts are provided by residues 261 to 265, Arg295, Lys300, Val358, Arg410, Asp564, and 580 to 581; these read GGGTA and HH. The segment at 644 to 681 is disordered; sequence VDQLSESSDSDVPETSTSSSQSSKSDAGASQDGVTCDP. Low complexity predominate over residues 656–676; the sequence is PETSTSSSQSSKSDAGASQDG.

Belongs to the FAD-dependent oxidoreductase family. Requires FAD as cofactor.

It is found in the mitochondrion intermembrane space. The enzyme catalyses A + NADH + H(+) = AH2 + NAD(+). Functionally, probable NADH oxidoreductase. Mitochondrial effector of cell death that plays roles in developmentally regulated cell death and normal mitochondrial function. The protein is Putative apoptosis-inducing factor 1, mitochondrial (AIF) of Drosophila melanogaster (Fruit fly).